Consider the following 418-residue polypeptide: Tyrosine--tRNA ligase (418 aa).

Position 34 (tyrosine 34) interacts with L-tyrosine. The 'HIGH' region signature appears at 39 to 48; the sequence is PTADSLHLGH. L-tyrosine-binding residues include tyrosine 169 and glutamine 173. The short motif at 229–233 is the 'KMSKS' region element; sequence KFGKS. Lysine 232 serves as a coordination point for ATP. The S4 RNA-binding domain maps to 352–418; it reads LNIVDMLVTA…GKKKYAVLTY (67 aa).

The protein belongs to the class-I aminoacyl-tRNA synthetase family. TyrS type 1 subfamily. In terms of assembly, homodimer.

The protein resides in the cytoplasm. It carries out the reaction tRNA(Tyr) + L-tyrosine + ATP = L-tyrosyl-tRNA(Tyr) + AMP + diphosphate + H(+). Its function is as follows. Catalyzes the attachment of tyrosine to tRNA(Tyr) in a two-step reaction: tyrosine is first activated by ATP to form Tyr-AMP and then transferred to the acceptor end of tRNA(Tyr). This is Tyrosine--tRNA ligase from Streptococcus equi subsp. zooepidemicus (strain MGCS10565).